The chain runs to 289 residues: Thymidylate synthase (289 aa).

Residues Arg26 and 151 to 152 (RR) each bind dUMP. The active-site Nucleophile is the Cys171. Residues 191 to 194 (RSGD), Asn202, and 232 to 234 (HVY) each bind dUMP. A (6R)-5,10-methylene-5,6,7,8-tetrahydrofolate-binding site is contributed by Asp194. Ala288 lines the (6R)-5,10-methylene-5,6,7,8-tetrahydrofolate pocket.

It belongs to the thymidylate synthase family. Homodimer.

It carries out the reaction dUMP + (6R)-5,10-methylene-5,6,7,8-tetrahydrofolate = 7,8-dihydrofolate + dTMP. Its pathway is pyrimidine metabolism; dTTP biosynthesis. In Equus caballus (Horse), this protein is Thymidylate synthase.